We begin with the raw amino-acid sequence, 100 residues long: Signal recognition particle 19 kDa protein (100 aa).

Belongs to the SRP19 family. Part of the signal recognition particle protein translocation system, which is composed of SRP and FtsY. Archaeal SRP consists of a 7S RNA molecule of 300 nucleotides and two protein subunits: SRP54 and SRP19.

The protein resides in the cytoplasm. Involved in targeting and insertion of nascent membrane proteins into the cytoplasmic membrane. Binds directly to 7S RNA and mediates binding of the 54 kDa subunit of the SRP. In Pyrococcus furiosus (strain ATCC 43587 / DSM 3638 / JCM 8422 / Vc1), this protein is Signal recognition particle 19 kDa protein.